The primary structure comprises 153 residues: MSEENPCPRNIFLLCREYGLELEDLRILCVYCKRPLSDADVLAFAVKELFVVWRKGFPYGACEKCLIAAAKLRQYRHWHYSCYGDTVETETGIPIPQLFMRCYICHKPLCWEEKEALLVGNKRFHKISGQWTGHCMNCAPRCMENAPALRTSH.

2 zinc fingers span residues 29-65 (CVYC…CEKC) and 102-138 (CYIC…CMNC).

The protein belongs to the papillomaviridae E6 protein family. Forms homodimers. Interacts with ubiquitin-protein ligase UBE3A/E6-AP; this interaction stimulates UBE3A ubiquitin activity. Interacts with host TP53 and EP300; this interaction inhibits TP53 activity.

It is found in the host cytoplasm. The protein resides in the host nucleus. Plays a major role in the induction and maintenance of cellular transformation. E6 associates with host UBE3A/E6-AP ubiquitin-protein ligase and modulates its activity. Sequesters tumor suppressor TP53 in the host cytoplasm and modulates its activity by interacting with host EP300 that results in the reduction of TP53 acetylation and activation. In turn, apoptosis induced by DNA damage is inhibited. E6 also protects host keratinocytes from apoptosis by mediating the degradation of host BAK1. May also inhibit host immune response. The chain is Protein E6 from Homo sapiens (Human).